The sequence spans 181 residues: Ion-translocating oxidoreductase complex subunit B (181 aa).

A hydrophobic region spans residues 1–26 (MLEAVSAVMSLGGMALFAGLGLGYAA). The region spanning 32-90 (EADPVVEKLEALLPATNCGMCGHPGCGPYAQAITEGEAINLCTPGGKAVMESIAAMLGV) is the 4Fe-4S domain. Positions 49, 52, 57, 73, 110, 113, 116, 120, 140, 143, 146, and 150 each coordinate [4Fe-4S] cluster. 4Fe-4S ferredoxin-type domains follow at residues 101–130 (KVAY…GANK) and 131–160 (QSHT…MQPV).

It belongs to the 4Fe4S bacterial-type ferredoxin family. RnfB subfamily. The complex is composed of six subunits: RnfA, RnfB, RnfC, RnfD, RnfE and RnfG. Requires [4Fe-4S] cluster as cofactor.

Its subcellular location is the cell inner membrane. Functionally, part of a membrane-bound complex that couples electron transfer with translocation of ions across the membrane. In Magnetococcus marinus (strain ATCC BAA-1437 / JCM 17883 / MC-1), this protein is Ion-translocating oxidoreductase complex subunit B.